The chain runs to 92 residues: Acylphosphatase (92 aa).

Positions 5-92 (CIAAYVYGVV…TPFETFKIRY (88 aa)) constitute an Acylphosphatase-like domain. Residues arginine 20 and asparagine 38 contribute to the active site.

Belongs to the acylphosphatase family.

It catalyses the reaction an acyl phosphate + H2O = a carboxylate + phosphate + H(+). This Yersinia enterocolitica serotype O:8 / biotype 1B (strain NCTC 13174 / 8081) protein is Acylphosphatase (acyP).